The chain runs to 174 residues: uncharacterized protein (174 aa).

This is an uncharacterized protein from Aquifex aeolicus (strain VF5).